The following is a 71-amino-acid chain: Large ribosomal subunit protein bL31 (71 aa).

Residues Cys-16, Cys-18, Cys-36, and Cys-39 each contribute to the Zn(2+) site.

This sequence belongs to the bacterial ribosomal protein bL31 family. Type A subfamily. In terms of assembly, part of the 50S ribosomal subunit. Zn(2+) is required as a cofactor.

Functionally, binds the 23S rRNA. This Thermus thermophilus (strain ATCC BAA-163 / DSM 7039 / HB27) protein is Large ribosomal subunit protein bL31.